We begin with the raw amino-acid sequence, 835 residues long: Leucine--tRNA ligase (835 aa).

The short motif at Pro-36–His-46 is the 'HIGH' region element. A 'KMSKS' region motif is present at residues Lys-602–Ser-606. Lys-605 serves as a coordination point for ATP.

Belongs to the class-I aminoacyl-tRNA synthetase family.

The protein resides in the cytoplasm. It carries out the reaction tRNA(Leu) + L-leucine + ATP = L-leucyl-tRNA(Leu) + AMP + diphosphate. The protein is Leucine--tRNA ligase of Rickettsia africae (strain ESF-5).